The following is a 119-amino-acid chain: Large ribosomal subunit protein P3 (119 aa).

Residues 81-119 (GAAAGAASGGAAAEAPKAEEKKEEEKEESEDDLGFSLFD) form a disordered region. Positions 84–95 (AGAASGGAAAEA) are enriched in low complexity.

Belongs to the eukaryotic ribosomal protein P1/P2 family. In terms of processing, phosphorylated.

In terms of biological role, plays an important role in the elongation step of protein synthesis. This is Large ribosomal subunit protein P3 from Oryza sativa subsp. japonica (Rice).